A 294-amino-acid polypeptide reads, in one-letter code: MIKQYLQVTKPGIIFGNLISVIGGFLLASKGVIDYPLFISTLLGVSLVVASGCVFNNYIDRDIDRIMERTKNRVLVKGLIDPKISLIYASILGIAGIVLLYAAANALAMQLAIIGFVVYVGVYSLYMKRKSVYGTLIGSLSGAAPPVIGYCAVTGQFDTGALILLLIFSLWQMPHSYAIAIFRFKDYQAANIPVLPVIKGISVAKNHIILYILAFMIATLMLAISGYAGYKYLVVAAAVSVWWLGMALSGYKTDNDRIWARKLFIFSIVAITSLSVMMSIDPHVPSEAFLTYVR.

9 helical membrane passes run 13-33 (IIFG…KGVI), 35-55 (YPLF…GCVF), 84-104 (ISLI…YAAA), 107-127 (LAMQ…SLYM), 132-152 (VYGT…GYCA), 162-182 (LILL…IAIF), 208-228 (IILY…SGYA), 229-249 (GYKY…MALS), and 264-284 (FIFS…DPHV).

It belongs to the UbiA prenyltransferase family. Protoheme IX farnesyltransferase subfamily.

It localises to the cell inner membrane. The enzyme catalyses heme b + (2E,6E)-farnesyl diphosphate + H2O = Fe(II)-heme o + diphosphate. The protein operates within porphyrin-containing compound metabolism; heme O biosynthesis; heme O from protoheme: step 1/1. Functionally, converts heme B (protoheme IX) to heme O by substitution of the vinyl group on carbon 2 of heme B porphyrin ring with a hydroxyethyl farnesyl side group. This Photorhabdus laumondii subsp. laumondii (strain DSM 15139 / CIP 105565 / TT01) (Photorhabdus luminescens subsp. laumondii) protein is Protoheme IX farnesyltransferase.